Reading from the N-terminus, the 904-residue chain is Phosphatidate phosphatase PAH1 (904 aa).

Residues 1 to 112 are N-LIP; that stretch reads MSLVGRVGSL…SGSENNNGNQ (112 aa). Disordered stretches follow at residues 254-293, 305-326, 440-470, 574-595, and 612-655; these read EESSDTANIASDKVDAINDERNDLDSHSRDNAEKDSHDAE, ELTKTSENVKSEEPGPTFEDRN, GIIESEDQDSERVSIDSTREEVDKDNEDRKT, VEENESPKPKDDETTITPSSSG, and EHTG…QLVR. Basic and acidic residues-rich tracts occupy residues 265–293, 311–326, and 449–470; these read DKVDAINDERNDLDSHSRDNAEKDSHDAE, ENVKSEEPGPTFEDRN, and SERVSIDSTREEVDKDNEDRKT. The span at 631 to 642 shows a compositional bias: polar residues; that stretch reads GLQNSPETQSTT. Residues 703–857 are C-LIP; the sequence is IVISDVDGTI…FIINPKGEVA (155 aa). The DXDXT motif signature appears at 707–711; that stretch reads DVDGT.

This sequence belongs to the lipin family. Requires Mg(2+) as cofactor. In terms of tissue distribution, expressed in roots, leaves, stems, flowers, siliques, embryos and mature seeds.

The protein localises to the cytoplasm. Its subcellular location is the cytosol. It catalyses the reaction a 1,2-diacyl-sn-glycero-3-phosphate + H2O = a 1,2-diacyl-sn-glycerol + phosphate. Magnesium-dependent phosphatidate phosphatase which catalyzes the dephosphorylation of phosphatidate to yield diacylglycerol. Acts redundantly with PAH2 to repress phospholipid biosynthesis at the endoplasmic reticulum (ER). May function indirectly as repressor of multiple enzymes involved in phospholipid biosynthesis. Is involved in the pathway of galactolipid synthesis in the ER, which is required for the membrane lipid remodeling, an essential adaptation mechanism to cope with phosphate starvation. The protein is Phosphatidate phosphatase PAH1 (PAH1) of Arabidopsis thaliana (Mouse-ear cress).